The following is a 320-amino-acid chain: Aspartate carbamoyltransferase catalytic subunit (320 aa).

2 residues coordinate carbamoyl phosphate: Arg-65 and Thr-66. Lys-93 contributes to the L-aspartate binding site. Carbamoyl phosphate-binding residues include Arg-115, His-143, and Gln-146. 2 residues coordinate L-aspartate: Arg-176 and Arg-230. Carbamoyl phosphate is bound by residues Gly-271 and Pro-272.

This sequence belongs to the aspartate/ornithine carbamoyltransferase superfamily. ATCase family. As to quaternary structure, heterododecamer (2C3:3R2) of six catalytic PyrB chains organized as two trimers (C3), and six regulatory PyrI chains organized as three dimers (R2).

The enzyme catalyses carbamoyl phosphate + L-aspartate = N-carbamoyl-L-aspartate + phosphate + H(+). The protein operates within pyrimidine metabolism; UMP biosynthesis via de novo pathway; (S)-dihydroorotate from bicarbonate: step 2/3. In terms of biological role, catalyzes the condensation of carbamoyl phosphate and aspartate to form carbamoyl aspartate and inorganic phosphate, the committed step in the de novo pyrimidine nucleotide biosynthesis pathway. In Maricaulis maris (strain MCS10) (Caulobacter maris), this protein is Aspartate carbamoyltransferase catalytic subunit.